Consider the following 602-residue polypeptide: Threonine--tRNA ligase (602 aa).

A catalytic region spans residues 208–499 (DHRKLGIELK…LTEHCAGEFP (292 aa)). The Zn(2+) site is built by C300, H351, and H476.

Belongs to the class-II aminoacyl-tRNA synthetase family. Homodimer. The cofactor is Zn(2+).

The protein resides in the cytoplasm. The catalysed reaction is tRNA(Thr) + L-threonine + ATP = L-threonyl-tRNA(Thr) + AMP + diphosphate + H(+). Catalyzes the attachment of threonine to tRNA(Thr) in a two-step reaction: L-threonine is first activated by ATP to form Thr-AMP and then transferred to the acceptor end of tRNA(Thr). Also edits incorrectly charged L-seryl-tRNA(Thr). The chain is Threonine--tRNA ligase from Campylobacter jejuni subsp. doylei (strain ATCC BAA-1458 / RM4099 / 269.97).